The chain runs to 474 residues: Protein Rv3254 (474 aa).

Positions 1-4 (MTGR) are excised as a propeptide.

The sequence is that of Protein Rv3254 from Mycobacterium tuberculosis (strain ATCC 25618 / H37Rv).